The following is a 678-amino-acid chain: Transcriptional regulator CRZ1 (678 aa).

The span at 1–21 (MSFSNGNMASYMTSSNGEEQS) shows a compositional bias: polar residues. 2 disordered regions span residues 1-50 (MSFS…SHTF) and 159-195 (TPAD…NYSD). The span at 34 to 47 (YRRNNFRNSSNSGS) shows a compositional bias: low complexity. Polar residues predominate over residues 166 to 195 (RPSLTNQFLSPRSNYDGTTRSSGIDSNYSD). Position 170 is a phosphothreonine (Thr-170). Residues Ser-175, Ser-245, and Ser-385 each carry the phosphoserine modification. The tract at residues 401 to 486 (KLKKSRRRSS…SNFNEDNNNN (86 aa)) is disordered. Over residues 410 to 428 (SQTSNNSFTSRRSSRSRSI) the composition is skewed to low complexity. Basic and acidic residues-rich tracts occupy residues 429–446 (SPDE…KLLE) and 457–467 (DNNRERYDNDS). Residues 472–486 (NTINSSNFNEDNNNN) show a composition bias toward low complexity. 2 C2H2-type zinc fingers span residues 569–591 (FACD…LRTH) and 597–619 (FICS…EDLH).

Phosphorylated. Dephosphorylated by calcineurin which leads to rapid translocation from the cytoplasm to the nucleus. Phosphorylated by the cyclin-CDK PHO80-PHO85.

The protein resides in the nucleus. Its subcellular location is the cytoplasm. Functionally, involved in the regulation of calcium ion homeostasis. Binds to the calcineurin-dependent response element. Transcriptionally regulates PMC1, PMR1, PMR2A and FKS2. This chain is Transcriptional regulator CRZ1 (CRZ1), found in Saccharomyces cerevisiae (strain ATCC 204508 / S288c) (Baker's yeast).